The primary structure comprises 137 residues: Protein LTO1 homolog (137 aa).

Ala-2 carries the post-translational modification N-acetylalanine. Residue Ser-4 is modified to Phosphoserine. Positions 22 to 58 (GYREGYEEGSSLGVMEGRQHGTLHGAKIGSEIGCYQG) are deca-GX3 motif; required for interaction with YAE1 and the CIA complex.

This sequence belongs to the LTO1 family. Forms a complex with YAE1. Interacts with PYCR1 and PYCR2. In terms of tissue distribution, widely expressed. Highly expressed in placenta, kidney and skeletal muscle.

Its subcellular location is the nucleus. The complex LTO1:YAE1 functions as a target specific adapter that probably recruits apo-ABCE1 to the cytosolic iron-sulfur protein assembly (CIA) complex machinery. May be required for biogenesis of the large ribosomal subunit and initiation of translation. May play a role in the regulation of proline metabolism and ROS production. This Homo sapiens (Human) protein is Protein LTO1 homolog.